Here is a 608-residue protein sequence, read N- to C-terminus: 65-kDa microtubule-associated protein 6 (608 aa).

3 coiled-coil regions span residues aspartate 164 to aspartate 186, glutamate 368 to lysine 388, and valine 467 to glutamine 503. Positions leucine 501–asparagine 565 are disordered. Low complexity predominate over residues serine 510 to proline 523. Position 513 is a phosphoserine (serine 513). Polar residues predominate over residues phenylalanine 526–valine 535. Position 604 is a phosphoserine (serine 604).

Belongs to the MAP65/ASE1 family. Forms a dimer. Binds to polymerized centrally located endocytic MT.

Its subcellular location is the nucleus. The protein resides in the cytoplasm. It is found in the mitochondrion. The protein localises to the cytoskeleton. It localises to the phragmoplast. Functionally, microtubule-associated protein that mediates the formation of a mesh-like stable and dense network formed by individual microtubules (MT). Confers MT resistance to high concentration of NaCl. This Arabidopsis thaliana (Mouse-ear cress) protein is 65-kDa microtubule-associated protein 6 (MAP65-6).